The sequence spans 377 residues: uncharacterized protein (377 aa).

Residues 1 to 46 are disordered; sequence MLAGLRRRGSMTTPPGPEIPPPHQGGFYSAGHHPQRPWPETPPPKT. Pro residues-rich tracts occupy residues 14–23 and 36–45; these read PPGPEIPPPH and RPWPETPPPK. Residues 53–73 traverse the membrane as a helical segment; the sequence is MLGAVALLAVVGVTVAVTLAV. The segment at 77-107 is disordered; the sequence is DKRDAIPPGSGVSGSPTASDIASADDSGPVS.

The protein localises to the cell inner membrane. In terms of biological role, may be involved in the ESX-1 / type VII specialized secretion system (T7SS), which exports several proteins including EsxA and EsxB. Involved in DNA conjugation in the recipient strain. This is an uncharacterized protein from Mycolicibacterium smegmatis (strain MKD8) (Mycobacterium smegmatis).